A 184-amino-acid polypeptide reads, in one-letter code: Large ribosomal subunit protein uL6 (184 aa).

Belongs to the universal ribosomal protein uL6 family. Part of the 50S ribosomal subunit.

In terms of biological role, this protein binds to the 23S rRNA, and is important in its secondary structure. It is located near the subunit interface in the base of the L7/L12 stalk, and near the tRNA binding site of the peptidyltransferase center. The chain is Large ribosomal subunit protein uL6 from Cytophaga hutchinsonii (strain ATCC 33406 / DSM 1761 / CIP 103989 / NBRC 15051 / NCIMB 9469 / D465).